We begin with the raw amino-acid sequence, 146 residues long: 3-hydroxyacyl-[acyl-carrier-protein] dehydratase FabZ (146 aa).

The active site involves H48.

The protein belongs to the thioester dehydratase family. FabZ subfamily.

It localises to the cytoplasm. It carries out the reaction a (3R)-hydroxyacyl-[ACP] = a (2E)-enoyl-[ACP] + H2O. Involved in unsaturated fatty acids biosynthesis. Catalyzes the dehydration of short chain beta-hydroxyacyl-ACPs and long chain saturated and unsaturated beta-hydroxyacyl-ACPs. The polypeptide is 3-hydroxyacyl-[acyl-carrier-protein] dehydratase FabZ (Paracidovorax citrulli (strain AAC00-1) (Acidovorax citrulli)).